The sequence spans 788 residues: Spastin (788 aa).

Residues 1-105 (MVRTKNQSSS…PRSAGGPSSV (105 aa)) form a disordered region. The Cytoplasmic portion of the chain corresponds to 1–116 (MVRTKNQSSS…KQNLYVVSFP (116 aa)). Residues 1 to 227 (MVRTKNQSSS…NRSGSGYSPG (227 aa)) form a required for localization to punctate cytoplasmic foci region. 2 stretches are compositionally biased toward low complexity: residues 8-48 (SSSS…SSHR) and 57-75 (ATNV…SSPD). An intramembrane region (helical) is located at residues 117 to 137 (IIFLFNVLRSLIYQLFCIFRY). The Cytoplasmic portion of the chain corresponds to 138–788 (LYGASTKVIY…WSSDYGDITI (651 aa)). The sufficient for interaction with microtubules and microtubule severing stretch occupies residues 227-788 (GPGDPLLAKQ…WSSDYGDITI (562 aa)). The MIT domain occupies 240–315 (HRRAFEYISK…SMARDRLHFL (76 aa)). The segment covering 331-353 (EKQKANESREQQQKPQKAREAAD) has biased composition (basic and acidic residues). The interval 331–484 (EKQKANESRE…SGSGSGASTP (154 aa)) is disordered. Over residues 387 to 400 (ATATTPTSSSSLAS) the composition is skewed to low complexity. Polar residues-rich tracts occupy residues 419–433 (NKSQ…SKTS) and 453–469 (QFSS…RTPI). The required for interaction with microtubules stretch occupies residues 471-485 (NNGASGSGSGASTPV). An ATP-binding site is contributed by 553–560 (GPPGNGKT).

It belongs to the AAA ATPase family. Spastin subfamily. As to quaternary structure, homohexamer. The homohexamer is stabilized by ATP-binding. The homohexamer may adopt a ring conformation through which microtubules pass prior to being severed. Interacts with microtubules. Interacts with atl; may be involved in microtubule dynamics.

The protein resides in the membrane. It localises to the cytoplasm. The protein localises to the cytoskeleton. Its subcellular location is the microtubule organizing center. It is found in the centrosome. The protein resides in the chromosome. It localises to the lipid droplet. It catalyses the reaction n ATP + n H2O + a microtubule = n ADP + n phosphate + (n+1) alpha/beta tubulin heterodimers.. In terms of biological role, ATP-dependent microtubule severing protein. Stimulates microtubule minus-end depolymerization and poleward microtubule flux in the mitotic spindle. Regulates microtubule stability in the neuromuscular junction synapse. Involved in lipid metabolism by regulating the size and distribution of lipid droplets. Involved in axon regeneration by regulating microtubule severing. The polypeptide is Spastin (Drosophila persimilis (Fruit fly)).